Here is a 193-residue protein sequence, read N- to C-terminus: MFKNTFQSGFLSILYSIGSKPLQIWDKKVRNGHIKRITDNDIQSLVLEIEGTNVSTTYITCPADPKKTLGIKLPFLVMIIKNLKKYFTFEVQVLDDKNVRRRFRASNYQSTTRVKPFICTMPMRLDDGWNQIQFNLLDFTRRAYGTNYIETLRVQIHANCRIRRVYFSDRLYSEDELPAEFKLYLPVQNKAKQ.

Belongs to the CFAP20 family. As to quaternary structure, microtubule inner protein component of sperm flagellar doublet microtubules.

It localises to the nucleus. It is found in the cytoplasm. Its subcellular location is the cytoskeleton. The protein localises to the microtubule organizing center. The protein resides in the centrosome. It localises to the centriole. It is found in the cilium basal body. Its subcellular location is the cilium axoneme. The protein localises to the flagellum axoneme. Its function is as follows. Cilium- and flagellum-specific protein that plays a role in axonemal structure organization and motility. Microtubule inner protein (MIP) part of the dynein-decorated doublet microtubules (DMTs) in cilia axoneme, which is required for motile cilia beating. Involved in the regulation of the size and morphology of cilia. Required for axonemal microtubules polyglutamylation. The protein is Cilia- and flagella-associated protein 20 of Homo sapiens (Human).